The sequence spans 512 residues: Histidine ammonia-lyase (512 aa).

A cross-link (5-imidazolinone (Ala-Gly)) is located at residues 142–144 (ASG). 2,3-didehydroalanine (Ser) is present on serine 143.

The protein belongs to the PAL/histidase family. In terms of processing, contains an active site 4-methylidene-imidazol-5-one (MIO), which is formed autocatalytically by cyclization and dehydration of residues Ala-Ser-Gly.

It is found in the cytoplasm. The catalysed reaction is L-histidine = trans-urocanate + NH4(+). It functions in the pathway amino-acid degradation; L-histidine degradation into L-glutamate; N-formimidoyl-L-glutamate from L-histidine: step 1/3. In Bartonella quintana (strain Toulouse) (Rochalimaea quintana), this protein is Histidine ammonia-lyase.